The following is a 59-amino-acid chain: uncharacterized protein (59 aa).

33-40 (GRRRVGKT) is an ATP binding site.

This is an uncharacterized protein from Methanocaldococcus jannaschii (strain ATCC 43067 / DSM 2661 / JAL-1 / JCM 10045 / NBRC 100440) (Methanococcus jannaschii).